A 389-amino-acid chain; its full sequence is S-adenosylmethionine synthase (389 aa).

ATP is bound at residue histidine 17. Mg(2+) is bound at residue aspartate 19. Glutamate 45 is a binding site for K(+). Residues glutamate 58 and glutamine 101 each coordinate L-methionine. The segment at 101-111 (QSPDIAQGVTE) is flexible loop. ATP is bound by residues 168–170 (DSK), 234–235 (RF), aspartate 243, 249–250 (RK), alanine 266, and lysine 270. Aspartate 243 is an L-methionine binding site. Lysine 274 contacts L-methionine.

Belongs to the AdoMet synthase family. Homotetramer; dimer of dimers. The cofactor is Mg(2+). It depends on K(+) as a cofactor.

The protein resides in the cytoplasm. The catalysed reaction is L-methionine + ATP + H2O = S-adenosyl-L-methionine + phosphate + diphosphate. Its pathway is amino-acid biosynthesis; S-adenosyl-L-methionine biosynthesis; S-adenosyl-L-methionine from L-methionine: step 1/1. Catalyzes the formation of S-adenosylmethionine (AdoMet) from methionine and ATP. The overall synthetic reaction is composed of two sequential steps, AdoMet formation and the subsequent tripolyphosphate hydrolysis which occurs prior to release of AdoMet from the enzyme. This chain is S-adenosylmethionine synthase, found in Geotalea uraniireducens (strain Rf4) (Geobacter uraniireducens).